We begin with the raw amino-acid sequence, 60 residues long: uncharacterized protein (60 aa).

This is an uncharacterized protein from Thermotoga maritima (strain ATCC 43589 / DSM 3109 / JCM 10099 / NBRC 100826 / MSB8).